A 361-amino-acid chain; its full sequence is Chorismate synthase (361 aa).

Residues Arg-48 and Arg-54 each contribute to the NADP(+) site. Residues 125-127, 238-239, Gly-278, 293-297, and Arg-319 each bind FMN; these read RSS, NA, and KPTSS.

This sequence belongs to the chorismate synthase family. As to quaternary structure, homotetramer. The cofactor is FMNH2.

The enzyme catalyses 5-O-(1-carboxyvinyl)-3-phosphoshikimate = chorismate + phosphate. It participates in metabolic intermediate biosynthesis; chorismate biosynthesis; chorismate from D-erythrose 4-phosphate and phosphoenolpyruvate: step 7/7. Its function is as follows. Catalyzes the anti-1,4-elimination of the C-3 phosphate and the C-6 proR hydrogen from 5-enolpyruvylshikimate-3-phosphate (EPSP) to yield chorismate, which is the branch point compound that serves as the starting substrate for the three terminal pathways of aromatic amino acid biosynthesis. This reaction introduces a second double bond into the aromatic ring system. The protein is Chorismate synthase of Escherichia coli O157:H7.